Reading from the N-terminus, the 367-residue chain is Flagellar P-ring protein (367 aa).

A signal peptide spans 1 to 21 (MYVFKALAGIVLALVATLAHA).

This sequence belongs to the FlgI family. In terms of assembly, the basal body constitutes a major portion of the flagellar organelle and consists of four rings (L,P,S, and M) mounted on a central rod.

It localises to the periplasm. The protein localises to the bacterial flagellum basal body. Functionally, assembles around the rod to form the L-ring and probably protects the motor/basal body from shearing forces during rotation. This Salmonella paratyphi C (strain RKS4594) protein is Flagellar P-ring protein.